A 113-amino-acid chain; its full sequence is Iron-sulfur cluster insertion protein ErpA (113 aa).

Cys41, Cys105, and Cys107 together coordinate iron-sulfur cluster.

It belongs to the HesB/IscA family. In terms of assembly, homodimer. Iron-sulfur cluster is required as a cofactor.

In terms of biological role, required for insertion of 4Fe-4S clusters for at least IspG. This chain is Iron-sulfur cluster insertion protein ErpA, found in Vibrio vulnificus (strain CMCP6).